A 319-amino-acid polypeptide reads, in one-letter code: Porphobilinogen deaminase 1 (319 aa).

An S-(dipyrrolylmethanemethyl)cysteine modification is found at Cys244.

Belongs to the HMBS family. In terms of assembly, monomer. Requires dipyrromethane as cofactor.

It catalyses the reaction 4 porphobilinogen + H2O = hydroxymethylbilane + 4 NH4(+). Its pathway is porphyrin-containing compound metabolism; protoporphyrin-IX biosynthesis; coproporphyrinogen-III from 5-aminolevulinate: step 2/4. Its function is as follows. Tetrapolymerization of the monopyrrole PBG into the hydroxymethylbilane pre-uroporphyrinogen in several discrete steps. The sequence is that of Porphobilinogen deaminase 1 (hemC1) from Streptomyces coelicolor (strain ATCC BAA-471 / A3(2) / M145).